The following is a 493-amino-acid chain: Protein translocase subunit SecY (493 aa).

The Cytoplasmic portion of the chain corresponds to 1–21 (MDSVIRALQPYFERIPSVERP). Residues 22–48 (KGHVHFREKFGWTAAILLLYFILSNVP) traverse the membrane as a helical segment. Over 49-59 (VFGLSPESIDI) the chain is Extracellular. An intramembrane region (helical) is located at residues 60–67 (FAAYRALF). Residues 60–88 (FAAYRALFAGSTGSIIALGIGPIVTASII) traverse the membrane as a discontinuously helical segment. An intramembrane segment occupies 68–79 (AGSTGSIIALGI). Residues 80 to 88 (GPIVTASII) constitute an intramembrane region (helical). Residues 89-109 (LQLLVGAGIIKLDLTNPEDRA) are Cytoplasmic-facing. A helical membrane pass occupies residues 110 to 134 (AYQDFQRFLVFVMIAVEAIPQIAGG). Residues 135-151 (LLKPDLNLAAQLGVSPG) lie on the Extracellular side of the membrane. The helical transmembrane segment at 152–176 (IISFLIFIQLFIGGVLIVYMDEVVS) threads the bilayer. Topologically, residues 177 to 182 (KWGIGS) are cytoplasmic. Residues 183 to 201 (GVSLFILAGIAQSIVVGLF) traverse the membrane as a helical segment. Topologically, residues 202–244 (NWVIPPNSAMPAGIIPRWIWIAQNYPLDQLFTGSGLAFLLIQG) are extracellular. Residues 245–266 (GILALITTAAIILLVVFFEGTR) traverse the membrane as a helical segment. Topologically, residues 267-291 (VEIPLAHAVARGARGRFPIKLIYAS) are cytoplasmic. A helical membrane pass occupies residues 292-313 (VLPMIFVRALQANVVALGQVLH). Residues 314 to 367 (ARGVTIFGEFVNGKAVSGLMFFLQPVSSPYDWIPSLVKSQGAAFAAIPDWMIYL) lie on the Extracellular side of the membrane. The helical transmembrane segment at 368–387 (HLLIDALILVVGGIIFAWFW) threads the bilayer. Over 388–430 (VETSGMDARTVASQIAKSGMQVPGFRKSPQVLERVLSRYIPKV) the chain is Cytoplasmic. A helical transmembrane segment spans residues 431-449 (TILGGAIIGILTLVANMLG). Residues 450-454 (TIGNV) lie on the Extracellular side of the membrane. A helical membrane pass occupies residues 455–469 (SGTGLLLAVSIAYRF). Residues 470 to 493 (YEDLAKEQLTEMHPLIRRMLGEEA) are Cytoplasmic-facing.

This sequence belongs to the SecY/SEC61-alpha family. As to quaternary structure, component of the Sec protein translocase complex. Heterotrimer consisting of alpha (SecY), beta (SecG) and gamma (SecE) subunits. The heterotrimers can form oligomers, although 1 heterotrimer is thought to be able to translocate proteins. Interacts with the ribosome. May interact with SecDF, and other proteins may be involved.

The protein localises to the cell membrane. In terms of biological role, the central subunit of the protein translocation channel SecYEG. Consists of two halves formed by TMs 1-5 and 6-10. These two domains form a lateral gate at the front which open onto the bilayer between TMs 2 and 7, and are clamped together by SecE at the back. The channel is closed by both a pore ring composed of hydrophobic SecY resides and a short helix (helix 2A) on the extracellular side of the membrane which forms a plug. The plug probably moves laterally to allow the channel to open. The ring and the pore may move independently. This chain is Protein translocase subunit SecY, found in Archaeoglobus fulgidus (strain ATCC 49558 / DSM 4304 / JCM 9628 / NBRC 100126 / VC-16).